The chain runs to 347 residues: MNPLIFSIITFTMMLGTGIVMTSSHWLTMWIGFEMNMLAIIPILMKKYNPRSMEASTKYFLTQATASMLLMLAVTINLVHSGQWSTTNPLNPAASIILTLAMAMKLGLSPFHFWVPEVTQGVHLPSGLILLTWQKLAPMSVLYQISPMINLDLMFTMSILSIAIGGWGGLNQTQLRKVMAYSSIAHMGWMTAILAYNPTMALLNLTIYIILTTTTFLTFMTNSTTTTLSLSHLWNKEPLITTIILVTMLSLGGLPPLSGFLPKWMIIQELTKNNSIIAPTTMAITALLNLFFYMRLIYSSALTLFPSMNNTVMKWQLNQTKSTALLSPLTILSTMILPLSPMLMLLE.

Helical transmembrane passes span 1-21, 25-45, 59-79, 96-116, 122-142, 148-168, 200-220, 240-260, 274-294, and 325-345; these read MNPL…GIVM, HWLT…PILM, YFLT…INLV, IILT…FWVP, VHLP…MSVL, MINL…GGWG, MALL…LTFM, ITTI…LSGF, NSII…FFYM, and LLSP…MLML.

Belongs to the complex I subunit 2 family. In terms of assembly, core subunit of respiratory chain NADH dehydrogenase (Complex I) which is composed of 45 different subunits. Interacts with TMEM242.

The protein localises to the mitochondrion inner membrane. It catalyses the reaction a ubiquinone + NADH + 5 H(+)(in) = a ubiquinol + NAD(+) + 4 H(+)(out). In terms of biological role, core subunit of the mitochondrial membrane respiratory chain NADH dehydrogenase (Complex I) which catalyzes electron transfer from NADH through the respiratory chain, using ubiquinone as an electron acceptor. Essential for the catalytic activity and assembly of complex I. In Thoopterus nigrescens (Swift fruit bat), this protein is NADH-ubiquinone oxidoreductase chain 2.